Here is a 534-residue protein sequence, read N- to C-terminus: Lariat debranching enzyme (534 aa).

Cysteine 8, histidine 10, aspartate 39, and asparagine 84 together coordinate a divalent metal cation. Positions serine 124 to arginine 154 are lariat recognition loop. Positions 174, 226, and 228 each coordinate a divalent metal cation. Disordered regions lie at residues lysine 242–serine 275 and threonine 501–aspartate 534.

This sequence belongs to the lariat debranching enzyme family. The cofactor is Fe(2+). Requires Zn(2+) as cofactor. It depends on Mn(2+) as a cofactor.

It localises to the nucleus. Active in presence of diverse metals including Fe(2+), Zn(2+), Mn(2+). Binds two metal cations in two adjacent alpha and beta metal-binding pockets. Its function is as follows. Cleaves the 2'-5' phosphodiester linkage at the branch point of lariat intron pre-mRNAs after splicing and converts them into linear molecules that are subsequently degraded. It thereby facilitates ribonucleotide turnover. In Drosophila melanogaster (Fruit fly), this protein is Lariat debranching enzyme (ldbr).